Here is a 438-residue protein sequence, read N- to C-terminus: MEGDTEIAELESDIRTLRKQLKEKVQQLKTLKKHFQKNCITKLNNNEIARYSRQIILSEIGVQGQLKLKRASVLVVGAGGLGCPSSLYLAGAGVGHIGILDYDEVELTNLHRQLLHTESTVGLTKVDSARDYLQELNSQIEVSTHHTQLTSDNALTILEQYDIVVDATDNVATRYLLNDACVLLKKPLVSGSALQLEGQLTVYNHKSGPCYRCLFPNPPPPETVTNCGDGGVLGAITGVIGALQALETIKIILGNDGVLSGRLLLFDGHQSSFRNLKLRGKKADCVACSDNPSLTKLIDYEQFCSMKATDKDSHLDLLSPEERITVQEYKSIVDSKQRHVLVDVRGANQFEICQLPCSVNVPIEDILKNRRGVTDILGSSESDDEVAVFVVCRRGNDSQLAVRHLAPLFKERGLPTPRDIVGGLHAWTRNVDKEFPIY.

Residues Gly80, Asp101, 108-112 (TNLHR), Lys125, and 169-170 (DN) each bind ATP. Zn(2+) is bound by residues Cys210 and Cys213. The active-site Glycyl thioester intermediate; for adenylyltransferase activity is Cys227. 2 residues coordinate Zn(2+): Cys285 and Cys288. In terms of domain architecture, Rhodanese spans 335–436 (SKQRHVLVDV…WTRNVDKEFP (102 aa)). Cys392 functions as the Cysteine persulfide intermediate; for sulfurtransferase activity in the catalytic mechanism.

This sequence in the N-terminal section; belongs to the HesA/MoeB/ThiF family. UBA4 subfamily. Zn(2+) is required as a cofactor.

The protein resides in the cytoplasm. It is found in the cytosol. It carries out the reaction [molybdopterin-synthase sulfur-carrier protein]-C-terminal Gly-Gly + ATP + H(+) = [molybdopterin-synthase sulfur-carrier protein]-C-terminal Gly-Gly-AMP + diphosphate. The catalysed reaction is [molybdopterin-synthase sulfur-carrier protein]-C-terminal Gly-Gly-AMP + S-sulfanyl-L-cysteinyl-[cysteine desulfurase] + AH2 = [molybdopterin-synthase sulfur-carrier protein]-C-terminal-Gly-aminoethanethioate + L-cysteinyl-[cysteine desulfurase] + A + AMP + 2 H(+). Its pathway is tRNA modification; 5-methoxycarbonylmethyl-2-thiouridine-tRNA biosynthesis. It participates in cofactor biosynthesis; molybdopterin biosynthesis. In terms of biological role, plays a central role in 2-thiolation of mcm(5)S(2)U at tRNA wobble positions of cytosolic tRNA(Lys), tRNA(Glu) and tRNA(Gln). Also essential during biosynthesis of the molybdenum cofactor. Acts by mediating the C-terminal thiocarboxylation of sulfur carriers URM1 and MOCS2A. Its N-terminus first activates URM1 and MOCS2A as acyl-adenylates (-COAMP), then the persulfide sulfur on the catalytic cysteine is transferred to URM1 and MOCS2A to form thiocarboxylation (-COSH) of their C-terminus. The reaction probably involves hydrogen sulfide that is generated from the persulfide intermediate and that acts as a nucleophile towards URM1 and MOCS2A. Subsequently, a transient disulfide bond is formed. Does not use thiosulfate as sulfur donor; NFS1 probably acting as a sulfur donor for thiocarboxylation reactions. In Culex quinquefasciatus (Southern house mosquito), this protein is Adenylyltransferase and sulfurtransferase MOCS3.